A 454-amino-acid chain; its full sequence is Guanine deaminase (454 aa).

2 residues coordinate Zn(2+): His-82 and His-84. Substrate contacts are provided by residues His-84–Gln-87, Arg-213–Phe-214, His-240–Glu-243, and Asp-330. Residues His-240 and Asp-330 each coordinate Zn(2+). Phosphoserine is present on Ser-453.

It belongs to the metallo-dependent hydrolases superfamily. ATZ/TRZ family. In terms of assembly, homodimer. Zn(2+) is required as a cofactor.

It carries out the reaction guanine + H2O + H(+) = xanthine + NH4(+). The protein operates within purine metabolism; guanine degradation; xanthine from guanine: step 1/1. In terms of biological role, catalyzes the hydrolytic deamination of guanine, producing xanthine and ammonia. The sequence is that of Guanine deaminase from Mus musculus (Mouse).